The following is a 729-amino-acid chain: Phosphoribosylformylglycinamidine synthase subunit PurL (729 aa).

H54 is an active-site residue. ATP-binding residues include Y57 and K96. E98 serves as a coordination point for Mg(2+). Substrate is bound by residues 99 to 102 (SHNH) and R121. H100 acts as the Proton acceptor in catalysis. D122 serves as a coordination point for Mg(2+). Q245 is a binding site for substrate. Mg(2+) is bound at residue D273. A substrate-binding site is contributed by 317 to 319 (ETQ). The ATP site is built by D495 and G532. Position 533 (N533) interacts with Mg(2+). Residue S535 coordinates substrate.

Belongs to the FGAMS family. As to quaternary structure, monomer. Part of the FGAM synthase complex composed of 1 PurL, 1 PurQ and 2 PurS subunits.

Its subcellular location is the cytoplasm. It carries out the reaction N(2)-formyl-N(1)-(5-phospho-beta-D-ribosyl)glycinamide + L-glutamine + ATP + H2O = 2-formamido-N(1)-(5-O-phospho-beta-D-ribosyl)acetamidine + L-glutamate + ADP + phosphate + H(+). It participates in purine metabolism; IMP biosynthesis via de novo pathway; 5-amino-1-(5-phospho-D-ribosyl)imidazole from N(2)-formyl-N(1)-(5-phospho-D-ribosyl)glycinamide: step 1/2. In terms of biological role, part of the phosphoribosylformylglycinamidine synthase complex involved in the purines biosynthetic pathway. Catalyzes the ATP-dependent conversion of formylglycinamide ribonucleotide (FGAR) and glutamine to yield formylglycinamidine ribonucleotide (FGAM) and glutamate. The FGAM synthase complex is composed of three subunits. PurQ produces an ammonia molecule by converting glutamine to glutamate. PurL transfers the ammonia molecule to FGAR to form FGAM in an ATP-dependent manner. PurS interacts with PurQ and PurL and is thought to assist in the transfer of the ammonia molecule from PurQ to PurL. The sequence is that of Phosphoribosylformylglycinamidine synthase subunit PurL from Staphylococcus haemolyticus (strain JCSC1435).